Consider the following 524-residue polypeptide: Cytochrome P450 monooxygenase patH (524 aa).

Residues 1 to 4 lie on the Cytoplasmic side of the membrane; it reads MEPM. Residues 5–23 traverse the membrane as a helical segment; the sequence is LLLILVAAVVLLFVRWAFV. Residues 24–524 are Lumenal-facing; it reads YGHRTSNMPK…KEVFSQFTEG (501 aa). Residue Asn-191 is glycosylated (N-linked (GlcNAc...) asparagine). Position 442 (Cys-442) interacts with heme. The N-linked (GlcNAc...) asparagine glycan is linked to Asn-499.

It belongs to the cytochrome P450 family. The cofactor is heme.

The protein localises to the endoplasmic reticulum membrane. It carries out the reaction 3-methylphenol + reduced [NADPH--hemoprotein reductase] + O2 = 3-hydroxybenzyl alcohol + oxidized [NADPH--hemoprotein reductase] + H2O + H(+). It participates in mycotoxin biosynthesis; patulin biosynthesis. Cytochrome P450 monooxygenase; part of the gene cluster that mediates the biosynthesis of patulin, an acetate-derived tetraketide mycotoxin produced by several fungal species that shows antimicrobial properties against several bacteria. PatH catalyzes the conversion of m-cresol into m-hydroxybenzyl alcohol. The pathway begins with the synthesis of 6-methylsalicylic acid by the polyketide synthase (PKS) patK via condensation of acetate and malonate units. The 6-methylsalicylic acid decarboxylase patG then catalyzes the decarboxylation of 6-methylsalicylic acid to yield m-cresol (also known as 3-methylphenol). These first reactions occur in the cytosol. The intermediate m-cresol is then transported into the endoplasmic reticulum where the cytochrome P450 monooxygenase patH converts it to m-hydroxybenzyl alcohol, which is further converted to gentisyl alcohol by the cytochrome P450 monooxygenase patI. The oxidoreductases patJ and patO further convert gentisyl alcohol to isoepoxydon in the vacuole. PatN catalyzes then the transformation of isoepoxydon into phyllostine. The cluster protein patF is responsible for the conversion from phyllostine to neopatulin whereas the alcohol dehydrogenase patD converts neopatulin to E-ascladiol. The steps between isoepoxydon and E-ascladiol occur in the cytosol, and E-ascladiol is probably secreted to the extracellular space by one of the cluster-specific transporters patC or patM. Finally, the secreted patulin synthase patE catalyzes the conversion of E-ascladiol to patulin. The sequence is that of Cytochrome P450 monooxygenase patH from Aspergillus clavatus (strain ATCC 1007 / CBS 513.65 / DSM 816 / NCTC 3887 / NRRL 1 / QM 1276 / 107).